Consider the following 309-residue polypeptide: Dihydroorotate dehydrogenase B (NAD(+)), catalytic subunit (309 aa).

Residues S21 and 45-46 (KA) contribute to the FMN site. Residues K45 and 69–73 (NAIGL) contribute to the substrate site. Residues N99 and N127 each contribute to the FMN site. N127 contributes to the substrate binding site. Catalysis depends on C130, which acts as the Nucleophile. Residues K165 and I191 each contribute to the FMN site. 192-193 (NT) contacts substrate. Residues G217, 243–244 (GG), and 265–266 (GT) each bind FMN.

The protein belongs to the dihydroorotate dehydrogenase family. Type 1 subfamily. Heterotetramer of 2 PyrK and 2 PyrD type B subunits. The cofactor is FMN.

It is found in the cytoplasm. It catalyses the reaction (S)-dihydroorotate + NAD(+) = orotate + NADH + H(+). Its pathway is pyrimidine metabolism; UMP biosynthesis via de novo pathway; orotate from (S)-dihydroorotate (NAD(+) route): step 1/1. Functionally, catalyzes the conversion of dihydroorotate to orotate with NAD(+) as electron acceptor. The polypeptide is Dihydroorotate dehydrogenase B (NAD(+)), catalytic subunit (pyrD) (Bacillus cereus (strain B4264)).